The following is a 230-amino-acid chain: C-methyltransferase CouO (230 aa).

It belongs to the methyltransferase superfamily.

The protein operates within antibiotic biosynthesis. Functionally, mediates C-methylation at the 8-position of the aminocoumarin moieties in coumermycin A1 in the biosynthetic pathway of coumermycin antibiotic. Active on both mono- and bis-amides for mono- and di-C-methylation adjacent to the phenolic hydroxyl before it is glycosylated by CouM. The polypeptide is C-methyltransferase CouO (couO) (Streptomyces rishiriensis).